Reading from the N-terminus, the 141-residue chain is Transmembrane protein 216 (141 aa).

4 consecutive transmembrane segments (helical) span residues 15-35 (ILFF…LFIF), 49-69 (LVLD…RLFF), 82-102 (LGIS…YLLL), and 115-135 (SILL…LTAF).

As to quaternary structure, part of the tectonic-like complex (also named B9 complex). Interacts with TMEM107.

It localises to the membrane. It is found in the cytoplasm. The protein localises to the cytoskeleton. The protein resides in the cilium basal body. Its function is as follows. Part of the tectonic-like complex which is required for tissue-specific ciliogenesis and may regulate ciliary membrane composition. This chain is Transmembrane protein 216 (TMEM216), found in Bos taurus (Bovine).